The primary structure comprises 425 residues: Glutamyl-tRNA reductase (425 aa).

Residues 49 to 52, S107, 112 to 114, and Q118 contribute to the substrate site; these read TCNR and EPQ. C50 serves as the catalytic Nucleophile. 187–192 is an NADP(+) binding site; it reads GAGETI.

This sequence belongs to the glutamyl-tRNA reductase family. In terms of assembly, homodimer.

It catalyses the reaction (S)-4-amino-5-oxopentanoate + tRNA(Glu) + NADP(+) = L-glutamyl-tRNA(Glu) + NADPH + H(+). The protein operates within porphyrin-containing compound metabolism; protoporphyrin-IX biosynthesis; 5-aminolevulinate from L-glutamyl-tRNA(Glu): step 1/2. Its function is as follows. Catalyzes the NADPH-dependent reduction of glutamyl-tRNA(Glu) to glutamate 1-semialdehyde (GSA). This is Glutamyl-tRNA reductase from Pseudomonas savastanoi pv. phaseolicola (strain 1448A / Race 6) (Pseudomonas syringae pv. phaseolicola (strain 1448A / Race 6)).